The chain runs to 493 residues: Transmembrane and coiled-coil domain-containing protein 6 (493 aa).

A coiled-coil region spans residues 15-84; the sequence is GVEELRRRRR…QRGTEEKERE (70 aa). Transmembrane regions (helical) follow at residues 338 to 358 and 386 to 406; these read VVAA…SLLP and PLLQ…TVLC.

The protein localises to the membrane. The protein is Transmembrane and coiled-coil domain-containing protein 6 (TMCO6) of Homo sapiens (Human).